The primary structure comprises 196 residues: Glutathione-specific gamma-glutamylcyclotransferase 1 (196 aa).

Residue 15-20 (IFGYGS) coordinates substrate. Glu-95 serves as the catalytic Proton acceptor.

Belongs to the gamma-glutamylcyclotransferase family. ChaC subfamily.

It is found in the cytoplasm. The protein localises to the cytosol. It localises to the golgi apparatus. Its subcellular location is the trans-Golgi network. The catalysed reaction is glutathione = L-cysteinylglycine + 5-oxo-L-proline. Functionally, catalyzes the cleavage of glutathione into 5-oxo-L-proline and a Cys-Gly dipeptide. Acts specifically on glutathione, but not on other gamma-glutamyl peptides. Glutathione depletion is an important factor for apoptosis initiation and execution. Acts as a pro-apoptotic component of the unfolded protein response pathway by mediating the pro-apoptotic effects of the ATF4-ATF3-DDIT3/CHOP cascade. Negative regulator of Notch signaling pathway involved in embryonic neurogenesis: acts by inhibiting Notch cleavage by furin, maintaining Notch in an immature inactive form, thereby promoting neurogenesis in embryos. This chain is Glutathione-specific gamma-glutamylcyclotransferase 1, found in Danio rerio (Zebrafish).